Consider the following 129-residue polypeptide: Lysozyme C (129 aa).

A C-type lysozyme domain is found at 1–129 (KVFGRCELAA…VRVWIKGCRL (129 aa)). 4 disulfides stabilise this stretch: C6–C127, C30–C115, C64–C80, and C76–C94. Active-site residues include E35 and D52.

It belongs to the glycosyl hydrolase 22 family. Monomer.

It localises to the secreted. It catalyses the reaction Hydrolysis of (1-&gt;4)-beta-linkages between N-acetylmuramic acid and N-acetyl-D-glucosamine residues in a peptidoglycan and between N-acetyl-D-glucosamine residues in chitodextrins.. In terms of biological role, lysozymes have primarily a bacteriolytic function; those in tissues and body fluids are associated with the monocyte-macrophage system and enhance the activity of immunoagents. This chain is Lysozyme C (LYZ), found in Numida meleagris (Helmeted guineafowl).